A 361-amino-acid chain; its full sequence is Phospho-N-acetylmuramoyl-pentapeptide-transferase (361 aa).

10 helical membrane passes run 25–45 (TGGAMVTGALFVFMFGPWIID), 72–92 (TPTMGGLMILSGLTVGTVLWA), 95–115 (LNPYVWIVLAVTLGFGFVGFY), 135–155 (LLIEFIIAGAACFALVWLGRA), 169–189 (VMLNLGWAFVVFGAFVVVGAG), 200–220 (GLAIVPVMIAAASFGLISYLA), 240–260 (LAVLCGALLGAGLGFLWFNAP), 264–284 (IFMGDTGSLALGGMLGSIAVA), 289–309 (IVLAVIGGLFVLEAVSVIVQV), and 338–358 (QIVIRFWIIAVMLALAGLSTL).

Belongs to the glycosyltransferase 4 family. MraY subfamily. Mg(2+) is required as a cofactor.

Its subcellular location is the cell inner membrane. The catalysed reaction is UDP-N-acetyl-alpha-D-muramoyl-L-alanyl-gamma-D-glutamyl-meso-2,6-diaminopimeloyl-D-alanyl-D-alanine + di-trans,octa-cis-undecaprenyl phosphate = di-trans,octa-cis-undecaprenyl diphospho-N-acetyl-alpha-D-muramoyl-L-alanyl-D-glutamyl-meso-2,6-diaminopimeloyl-D-alanyl-D-alanine + UMP. It functions in the pathway cell wall biogenesis; peptidoglycan biosynthesis. Catalyzes the initial step of the lipid cycle reactions in the biosynthesis of the cell wall peptidoglycan: transfers peptidoglycan precursor phospho-MurNAc-pentapeptide from UDP-MurNAc-pentapeptide onto the lipid carrier undecaprenyl phosphate, yielding undecaprenyl-pyrophosphoryl-MurNAc-pentapeptide, known as lipid I. The chain is Phospho-N-acetylmuramoyl-pentapeptide-transferase from Rhodopseudomonas palustris (strain TIE-1).